The sequence spans 400 residues: Multidrug resistance protein MdtH (400 aa).

At 1-12 (MSRVSQARNLGK) the chain is on the cytoplasmic side. A helical transmembrane segment spans residues 13 to 33 (YFLLIDNMLVVLGFFVVFPLI). Over 34-98 (SIRFVDQMGW…GFATMGIAHE (65 aa)) the chain is Periplasmic. The chain crosses the membrane as a helical span at residues 99–116 (PWLLWFSCLLSGLGGTLF). At 117-138 (DPPRSALVVKLIRPQQRGRFFS) the chain is on the cytoplasmic side. The chain crosses the membrane as a helical span at residues 139–159 (LLMMQDSAGAVIGALLGSWLL). Over 160 to 164 (QYDFR) the chain is Periplasmic. A helical transmembrane segment spans residues 165–185 (LVCATGAVLFVLCAAFNAWLL). Residues 186–213 (PAWKLSTVRTPVREGMTRVMRDKRFVTY) are Cytoplasmic-facing. A helical transmembrane segment spans residues 214-232 (VLTLAGYYMLAVQVMLPIM). Over 233–241 (VNDVAGAPS) the chain is Periplasmic. Residues 242 to 262 (AVKWMYAIEACLSLTLLYPIA) form a helical membrane-spanning segment. Over 263–274 (RWSEKHFRLEHR) the chain is Cytoplasmic. Residues 275 to 295 (LMAGLLIMSLSMMPVGMVSGL) form a helical membrane-spanning segment. Residues 296 to 297 (QQ) are Periplasmic-facing. A helical transmembrane segment spans residues 298–318 (LFTLICLFYIGSIIAEPARET). The Cytoplasmic portion of the chain corresponds to 319–337 (LSASLADARARGSYMGFSR). A helical membrane pass occupies residues 338-358 (LGLAIGGAIGYIGGGWLFDLG). Over 359 to 365 (KSAHQPE) the chain is Periplasmic. A helical transmembrane segment spans residues 366-386 (LPWMMLGIIGIFTFLALGWQF). Residues 387–400 (SQKRAARRLLERDA) lie on the Cytoplasmic side of the membrane.

The protein belongs to the major facilitator superfamily. DHA1 family. MdtH (TC 2.A.1.2.21) subfamily.

It localises to the cell inner membrane. The chain is Multidrug resistance protein MdtH from Shigella boydii serotype 4 (strain Sb227).